The sequence spans 362 residues: Heat-inducible transcription repressor HrcA (362 aa).

Belongs to the HrcA family.

Its function is as follows. Negative regulator of class I heat shock genes (grpE-dnaK-dnaJ and groELS operons). Prevents heat-shock induction of these operons. This is Heat-inducible transcription repressor HrcA from Rhizobium etli (strain CIAT 652).